Consider the following 440-residue polypeptide: Ferredoxin--NADP reductase (440 aa).

Residues 17 to 75 enclose the CpcD-like domain; that stretch reads SRVFVYEVVGMRQNEETDQTNYPIRKSGSVFIRVPYNRMNQEMQRITRLGGKIVTIQTV. The segment at 99-142 is disordered; sequence KSEGNGKATPVKTDSGAKAFAKPPAEEQLKKKDNKGNTMTQAKA. Basic and acidic residues predominate over residues 122-133; the sequence is PAEEQLKKKDNK. Residues 155–279 enclose the FAD-binding FR-type domain; that stretch reads NAPFIGKVIS…TGPVGKEMLL (125 aa). FAD is bound by residues 214–217, 235–237, Tyr241, 253–255, and Thr294; these read RLYS, CVR, and VCS. Residues Ser217 and Arg237 each contribute to the NADP(+) site. NADP(+) is bound by residues Thr294, 330 to 331, 360 to 361, 370 to 374, 399 to 400, and Glu438; these read VP, SR, RMYIQ, and GL.

Belongs to the ferredoxin--NADP reductase type 1 family. FAD is required as a cofactor.

It localises to the cellular thylakoid membrane. The enzyme catalyses 2 reduced [2Fe-2S]-[ferredoxin] + NADP(+) + H(+) = 2 oxidized [2Fe-2S]-[ferredoxin] + NADPH. The polypeptide is Ferredoxin--NADP reductase (petH) (Nostoc sp. (strain ATCC 29151 / PCC 7119) (Anabaena sp.)).